The primary structure comprises 628 residues: Monoterpene synthase like 1, chloroplastic (628 aa).

Residues Asp379, Asp383, and Asp531 each coordinate Mg(2+). A DDXXD motif motif is present at residues 379 to 383; that stretch reads DDIYD.

The protein belongs to the terpene synthase family. Tpsd subfamily. Mg(2+) is required as a cofactor. The cofactor is Mn(2+).

Its subcellular location is the plastid. The protein localises to the chloroplast. The protein operates within terpene metabolism; oleoresin biosynthesis. Its pathway is secondary metabolite biosynthesis; terpenoid biosynthesis. In terms of biological role, monoterpene synthase (TPS) involved in the biosynthesis of monoterpene natural products included in conifer oleoresin secretions and volatile emissions; these compounds contribute to biotic and abiotic stress defense against herbivores and pathogens. The polypeptide is Monoterpene synthase like 1, chloroplastic (Pinus banksiana (Jack pine)).